The primary structure comprises 663 residues: Alpha-1,4-glucan:maltose-1-phosphate maltosyltransferase (663 aa).

The interval 238–266 (IGETNRKGPDDAPEAGPDDPGSPWAIGGF) is disordered. Residues Lys-244, Gln-309, and Asp-344 each contribute to the alpha-maltose 1-phosphate site. The active-site Nucleophile is Asp-380. Residue Asn-381 participates in alpha-maltose 1-phosphate binding. Catalysis depends on Glu-409, which acts as the Proton donor. 521–522 (KY) is a binding site for alpha-maltose 1-phosphate.

Belongs to the glycosyl hydrolase 13 family. GlgE subfamily. In terms of assembly, homodimer.

It catalyses the reaction alpha-maltose 1-phosphate + [(1-&gt;4)-alpha-D-glucosyl](n) = [(1-&gt;4)-alpha-D-glucosyl](n+2) + phosphate. Maltosyltransferase that uses maltose 1-phosphate (M1P) as the sugar donor to elongate linear or branched alpha-(1-&gt;4)-glucans. Is involved in a branched alpha-glucan biosynthetic pathway from trehalose, together with TreS, Mak and GlgB. The polypeptide is Alpha-1,4-glucan:maltose-1-phosphate maltosyltransferase (Salinibacter ruber (strain DSM 13855 / M31)).